A 435-amino-acid polypeptide reads, in one-letter code: MVDMDWKRKMVSSDLPNSPKLSSKLHVTIPSPFKIVPVSSPISCSAPALCSAYELYLRLPELRKLWSSRDFPQWTSEPILKPALQALEISFRLVFAVCSDTRPYINHREWNRRLDSLITKQIQLVAAICEDEEEEGISAEAPVGGGRSSLSLLPQLATWRRSEALGKKILYTIDNEMSRCKYTLGLGEQNIAGKPNLRYDAICRPNEIYSLKDNPYADHIDNHENQTLYIIHQILESWIYASGNLLNRIVSSIEEEKFGKASNDVYLLEKIWKILAEIEDLHMLMDPEDFLKLKKQLQIKSTGKNDAFCFRSKGLVEMMKMSKDLRQKVPAVLAVEVDPTGGPRLQEAAMKLYARKTECDKIHLLQGMQAVEAAAKSFFFGYRQLVAAMMGSAEMNATASQESCDSLSQIFMEPTYFPSLDAAKTFLGEFWSHLG.

In terms of assembly, interacts with SNF4.

It localises to the cytoplasm. In terms of biological role, positive regulator of basal resistance. In Arabidopsis thaliana (Mouse-ear cress), this protein is Nematode resistance protein-like HSPRO2 (HSPRO2).